Reading from the N-terminus, the 177-residue chain is SPbeta prophage-derived uncharacterized protein YopI (177 aa).

Residues 11 to 31 traverse the membrane as a helical segment; the sequence is FEGIIGALLGVIVTLILTHIL.

The protein resides in the cell membrane. The polypeptide is SPbeta prophage-derived uncharacterized protein YopI (yopI) (Bacillus subtilis (strain 168)).